The following is a 493-amino-acid chain: Ribosomal protein uS12 methylthiotransferase RimO (493 aa).

The MTTase N-terminal domain maps to Arg-5–Asn-121. [4Fe-4S] cluster-binding residues include Cys-14, Cys-50, Cys-84, Cys-198, Cys-202, and Cys-205. Residues Leu-184–Arg-415 enclose the Radical SAM core domain. One can recognise a TRAM domain in the interval Glu-417–Glu-487.

Belongs to the methylthiotransferase family. RimO subfamily. Requires [4Fe-4S] cluster as cofactor.

It is found in the cytoplasm. It catalyses the reaction L-aspartate(89)-[ribosomal protein uS12]-hydrogen + (sulfur carrier)-SH + AH2 + 2 S-adenosyl-L-methionine = 3-methylsulfanyl-L-aspartate(89)-[ribosomal protein uS12]-hydrogen + (sulfur carrier)-H + 5'-deoxyadenosine + L-methionine + A + S-adenosyl-L-homocysteine + 2 H(+). In terms of biological role, catalyzes the methylthiolation of an aspartic acid residue of ribosomal protein uS12. The protein is Ribosomal protein uS12 methylthiotransferase RimO of Streptomyces griseus subsp. griseus (strain JCM 4626 / CBS 651.72 / NBRC 13350 / KCC S-0626 / ISP 5235).